Reading from the N-terminus, the 456-residue chain is Cysteine--tRNA ligase (456 aa).

Residue Cys28 coordinates Zn(2+). A 'HIGH' region motif is present at residues 30-40 (ITVYDHCHLGH). Zn(2+)-binding residues include Cys209, His234, and Glu238. Residues 266-270 (KMAKS) carry the 'KMSKS' region motif. Residue Lys269 participates in ATP binding.

This sequence belongs to the class-I aminoacyl-tRNA synthetase family. Monomer. It depends on Zn(2+) as a cofactor.

It is found in the cytoplasm. The catalysed reaction is tRNA(Cys) + L-cysteine + ATP = L-cysteinyl-tRNA(Cys) + AMP + diphosphate. The sequence is that of Cysteine--tRNA ligase from Legionella pneumophila subsp. pneumophila (strain Philadelphia 1 / ATCC 33152 / DSM 7513).